Here is a 604-residue protein sequence, read N- to C-terminus: Linalool synthase Tps-5042L13, chloroplastic (604 aa).

The transit peptide at 1-34 (MSSMRIYVAIMKKPSVKHVDNVDKKASKPSWRVS) directs the protein to the chloroplast. 5 residues coordinate (2E)-geranyl diphosphate: arginine 323, aspartate 360, aspartate 364, arginine 501, and aspartate 504. Residues aspartate 360 and aspartate 364 each coordinate Mg(2+). A DDXXD motif motif is present at residues 360–364 (DDVYD). Aspartate 504, threonine 508, and glutamate 512 together coordinate Mg(2+).

The protein belongs to the terpene synthase family. Tpsb subfamily. Monomer. The cofactor is Mg(2+). Requires Mn(2+) as cofactor.

The protein localises to the plastid. It is found in the chloroplast. It catalyses the reaction (2E)-geranyl diphosphate + H2O = linalool + diphosphate. The protein operates within secondary metabolite biosynthesis; terpenoid biosynthesis. In terms of biological role, monoterpene synthase (mono-TPS) involved in the biosynthesis of monoterpenes natural products. Catalyzes the conversion of (2E)-geranyl diphosphate (GPP) into linalool. The protein is Linalool synthase Tps-5042L13, chloroplastic of Perilla frutescens (Beefsteak mint).